A 189-amino-acid polypeptide reads, in one-letter code: Tumor protein p53-inducible protein 11 (189 aa).

At 1-63 (MAGKQPPPLM…FAVREPLGLR (63 aa)) the chain is on the cytoplasmic side. Phosphoserine is present on Ser14. The chain crosses the membrane as a helical span at residues 64–84 (VWQFLSAMLFSSVAIMALALP). Residues 85–108 (DQLYDAVFDGAEVTSKTPIRLYGG) are Extracellular-facing. Residues 109–129 (ALLSISLIMWNALYTAEKVII) traverse the membrane as a helical segment. A topological domain (cytoplasmic) is located at residue Arg130. A helical membrane pass occupies residues 131 to 151 (WTLLTEACYFGVQSLVVTATL). Over 152-155 (AETG) the chain is Extracellular. The helical transmembrane segment at 156–176 (LMSLGTVLLLASRLLFVIVSI) threads the bilayer. The Cytoplasmic segment spans residues 177–189 (YYYYQVGRKPKKV).

The protein localises to the membrane. This is Tumor protein p53-inducible protein 11 (Trp53i11) from Mus musculus (Mouse).